The chain runs to 688 residues: Amino-acid acetyltransferase, mitochondrial (688 aa).

A mitochondrion-targeting transit peptide spans 1-45; that stretch reads MSSRALTWPRTAKSSLLKQQTSSFVGQPKLGTPNCRSFSSTADRP. Disordered regions lie at residues 1–59 and 96–119; these read MSSR…SKSY and LKAQHPPKAQTEPTTGHSKGTVTQ. Polar residues-rich tracts occupy residues 12-25, 34-57, and 106-119; these read AKSSLLKQQTSSFV, NCRSFSSTADRPINQSAEFSSSSK, and TEPTTGHSKGTVTQ. Residues 509–678 enclose the N-acetyltransferase domain; that stretch reads NRPRLSLDDP…YEQVCRSIQP (170 aa).

It belongs to the acetyltransferase family.

It is found in the mitochondrion. It carries out the reaction L-glutamate + acetyl-CoA = N-acetyl-L-glutamate + CoA + H(+). Its pathway is amino-acid biosynthesis; L-arginine biosynthesis; N(2)-acetyl-L-ornithine from L-glutamate: step 1/4. In terms of biological role, N-acetylglutamate synthase involved in arginine biosynthesis. The sequence is that of Amino-acid acetyltransferase, mitochondrial (arg2) from Aspergillus flavus (strain ATCC 200026 / FGSC A1120 / IAM 13836 / NRRL 3357 / JCM 12722 / SRRC 167).